Reading from the N-terminus, the 200-residue chain is Inner membrane-spanning protein YciB (200 aa).

6 helical membrane-spanning segments follow: residues 1-21, 37-57, 66-86, 103-123, 136-156, and 167-187; these read MPPL…FFAN, IGAP…IALA, LAIM…LTLW, LFGG…GYVF, KLTL…EIVW, and FKVW…MPLI.

It belongs to the YciB family.

Its subcellular location is the cell inner membrane. In terms of biological role, plays a role in cell envelope biogenesis, maintenance of cell envelope integrity and membrane homeostasis. This Brucella melitensis biotype 1 (strain ATCC 23456 / CCUG 17765 / NCTC 10094 / 16M) protein is Inner membrane-spanning protein YciB.